We begin with the raw amino-acid sequence, 439 residues long: Transcription factor pydF (439 aa).

Positions 1–18 are enriched in basic and acidic residues; sequence MGRPQRADKQRRETDGPQ. 3 disordered regions span residues 1–53, 143–177, and 239–262; these read MGRP…GYAR, HVEK…QAVE, and AFRD…MQQH. Positions 20 to 35 are enriched in polar residues; sequence SRPSLTQAQKNSTTIR. Residues 143 to 153 show a composition bias toward basic and acidic residues; it reads HVEKATAERPG. Residues 157–172 are compositionally biased toward low complexity; that stretch reads SSSPSSSLLRTSSSPS. Over residues 243–260 the composition is skewed to polar residues; it reads GQNNGTSRPNTAASQNMQ.

The protein resides in the nucleus. Functionally, transcription factor; part of the gene cluster that mediates the biosynthesis of pyrrocidines, fungal natural products containing a macrocyclic para-cyclophane connected to a decahydrofluorene ring system that show potent antibiotic activities toward Gram-negative bacteria. In Acremonium sp, this protein is Transcription factor pydF.